We begin with the raw amino-acid sequence, 21 residues long: Complement receptor 3-related protein (21 aa).

It is found in the secreted. Plays a role in adherence of C.albicans to buccal epithelial cells, and in biofilm formation. The chain is Complement receptor 3-related protein from Candida albicans (Yeast).